Reading from the N-terminus, the 122-residue chain is Large ribosomal subunit protein uL14c (122 aa).

Belongs to the universal ribosomal protein uL14 family. In terms of assembly, part of the 50S ribosomal subunit.

It localises to the plastid. Its subcellular location is the chloroplast. Its function is as follows. Binds to 23S rRNA. The protein is Large ribosomal subunit protein uL14c of Calycanthus floridus var. glaucus (Eastern sweetshrub).